The primary structure comprises 1189 residues: Disabled homolog 2-interacting protein (1189 aa).

The segment at 1-75 (MSAGGSARKS…EPSAATPFRV (75 aa)) is disordered. The segment covering 20 to 38 (LLRRPRLQRQRSRSRSRTR) has biased composition (basic residues). The segment covering 39-49 (PARESPQERPG) has biased composition (basic and acidic residues). Residues 101 to 202 (SFRHILPGFR…WMENLRRAVH (102 aa)) enclose the PH domain. The C2 domain maps to 193-311 (WMENLRRAVH…AGRQFVEKWY (119 aa)). Residues 387–595 (GKVKDFLTDL…TNMQRFLLEI (209 aa)) form the Ras-GAP domain. Residues 646 to 943 (LRDVHTALST…RTPPNLLSTL (298 aa)) are necessary for interaction with AKT1. The segment covering 653–668 (LSTPGSGQLPGTNDLA) has biased composition (polar residues). Disordered regions lie at residues 653-678 (LSTP…SSSI) and 715-742 (RSSG…MANG). Positions 669-678 (STPGSGSSSI) are enriched in low complexity. Residues 715–731 (RSSGVQPSPARSSSYSE) show a composition bias toward polar residues. S728 is subject to Phosphoserine; by MAP3K5 and RIPK1. A Phosphoserine modification is found at S747. 5 disordered regions span residues 803-823 (AGQT…PQLL), 843-865 (PRGL…NSEE), 895-998 (SLTE…SPNA), 1015-1035 (EDEG…KDEL), and 1164-1189 (RNGI…SSNC). The span at 852–865 (EGHSSLSSHSNSEE) shows a compositional bias: low complexity. The span at 919–931 (QPPPPPPPPPPAP) shows a compositional bias: pro residues. 2 stretches are compositionally biased toward polar residues: residues 938 to 955 (NLLS…TLAS) and 966 to 976 (RLRQQSSSSKG). A phosphoserine mark is found at S978 and S995. Basic and acidic residues predominate over residues 1023-1035 (PPHRDRLRSKDEL). Residues 1026-1159 (RDRLRSKDEL…SALTQLKERY (134 aa)) adopt a coiled-coil conformation.

As to quaternary structure, on plasma membrane, exists in an inactive form complexed with TNFR1; in response to TNF-alpha, dissociates from TNFR1 complex, translocates to cytoplasm and forms part of an intracellular signaling complex comprising TRADD, RIPK1, TRAF2 and MAP3K5. Interacts with DAB1. Interacts (via NPXY motif) with DAB2 (via PID domain). Interacts (via PH domain) with ERN1. Part of a cytoplasmic complex made of HIPK1, DAB2IP and MAP3K5 in response to TNF-alpha; this complex formation promotes MAP3K5-JNK activation and subsequent apoptosis. Interacts (via N-terminal domain) with JAK2; the interaction occurs in a IFNG/IFN-gamma-dependent manner and inhibits JAK2 autophosphorylation activity. Interacts (via C2 domain) with GSK3B; the interaction stimulates GSK3B kinase activation. Interacts (via C2 domain) with PPP2CA. Interacts (via proline-rich motif) with a regulatory p85 subunit (via SH3 domain) of the PI3K complex; the interaction inhibits the PI3K-AKT complex activity in a TNF-alpha-dependent manner in prostate cancer (PCa) cells. Interacts with AKT1; the interaction is increased in a TNF-alpha-induced manner. Interacts (via C2 domain and active form preferentially) with KDR/VEGFR2 (tyrosine-phosphorylated active form preferentially); the interaction occurs at the late phase of VEGFA response and inhibits KDR/VEGFR2 activity. Interacts (via N-terminus C2 domain) with MAP3K5 ('Ser-966' dephosphorylated form preferentially); the interaction occurs in a TNF-alpha-induced manner. Interacts (via Ras-GAP domain) with the catalytic subunit of protein phosphatase PP2A; the interaction occurs in resting endothelial cells, is further enhanced by TNF-alpha stimulation and is required to bridge PP2A to MAP3K5. Interacts (via C-terminus PER domain) with TRAF2 (via zinc fingers); the interaction occurs in a TNF-alpha-dependent manner. Interacts with 14-3-3 proteins; the interaction occurs in a TNF-alpha-dependent manner. Interacts (via Ras-GAP domain) with RIPK1 (via kinase domain); the interaction occurs in a TNF-alpha-dependent manner. Interacts with RAB40C; acts as a GAP for RAB40C. In response to TNF-alpha-induction, phosphorylated at Ser-728; phosphorylation leads to a conformational change, and thus, increases its association with 14-3-3 proteins, MAP3K5, RIPK1 and TRAF2 in endothelial cells; also stimulates regulatory p85 subunit sequestring and PI3K-p85 complex activity inhibition. In terms of tissue distribution, expressed in endothelial and vascular smooth muscle cells (VSMCs). Expressed in prostate epithelial but poorly in prostate cancer cells. Poorly expressed in medulloblastoma cells compared to cerebellar precursor proliferating progenitor cells (at protein level). Low expression in prostate. Down-regulated in prostate cancer.

It localises to the cytoplasm. The protein localises to the cell membrane. The protein resides in the membrane. It is found in the cell projection. Its subcellular location is the dendrite. In terms of biological role, functions as a scaffold protein implicated in the regulation of a large spectrum of both general and specialized signaling pathways. Involved in several processes such as innate immune response, inflammation and cell growth inhibition, apoptosis, cell survival, angiogenesis, cell migration and maturation. Also plays a role in cell cycle checkpoint control; reduces G1 phase cyclin levels resulting in G0/G1 cell cycle arrest. Mediates signal transduction by receptor-mediated inflammatory signals, such as the tumor necrosis factor (TNF), interferon (IFN) or lipopolysaccharide (LPS). Modulates the balance between phosphatidylinositol 3-kinase (PI3K)-AKT-mediated cell survival and apoptosis stimulated kinase (MAP3K5)-JNK signaling pathways; sequesters both AKT1 and MAP3K5 and counterbalances the activity of each kinase by modulating their phosphorylation status in response to pro-inflammatory stimuli. Acts as a regulator of the endoplasmic reticulum (ER) unfolded protein response (UPR) pathway; specifically involved in transduction of the ER stress-response to the JNK cascade through ERN1. Mediates TNF-alpha-induced apoptosis activation by facilitating dissociation of inhibitor 14-3-3 from MAP3K5; recruits the PP2A phosphatase complex which dephosphorylates MAP3K5 on 'Ser-966', leading to the dissociation of 13-3-3 proteins and activation of the MAP3K5-JNK signaling pathway in endothelial cells. Also mediates TNF/TRAF2-induced MAP3K5-JNK activation, while it inhibits CHUK-NF-kappa-B signaling. Acts a negative regulator in the IFN-gamma-mediated JAK-STAT signaling cascade by inhibiting smooth muscle cell (VSMCs) proliferation and intimal expansion, and thus, prevents graft arteriosclerosis (GA). Acts as a GTPase-activating protein (GAP) for the ADP ribosylation factor 6 (ARF6), Ras and RAB40C. Promotes hydrolysis of the ARF6-bound GTP and thus, negatively regulates phosphatidylinositol 4,5-bisphosphate (PIP2)-dependent TLR4-TIRAP-MyD88 and NF-kappa-B signaling pathways in endothelial cells in response to lipopolysaccharides (LPS). Binds specifically to phosphatidylinositol 4-phosphate (PtdIns4P) and phosphatidylinositol 3-phosphate (PtdIns3P). In response to vascular endothelial growth factor (VEGFA), acts as a negative regulator of the VEGFR2-PI3K-mediated angiogenic signaling pathway by inhibiting endothelial cell migration and tube formation. In the developing brain, promotes both the transition from the multipolar to the bipolar stage and the radial migration of cortical neurons from the ventricular zone toward the superficial layer of the neocortex in a glial-dependent locomotion process. Probable downstream effector of the Reelin signaling pathway; promotes Purkinje cell (PC) dendrites development and formation of cerebellar synapses. Also functions as a tumor suppressor protein in prostate cancer progression; prevents cell proliferation and epithelial-to-mesenchymal transition (EMT) through activation of the glycogen synthase kinase-3 beta (GSK3B)-induced beta-catenin and inhibition of PI3K-AKT and Ras-MAPK survival downstream signaling cascades, respectively. The chain is Disabled homolog 2-interacting protein from Homo sapiens (Human).